A 131-amino-acid chain; its full sequence is MAIQRTDRLNSLLKEVISEVIRRDVRNPYVTELVTVTRVQISRDLRYAKVFISIIGSEQAKVETIEALNSAAGFIAVNASQKVVMRYFPELNFKLDDSVDKHMRIEELLGKITKERESRQGDNSDQLEQEP.

Belongs to the RbfA family. Monomer. Binds 30S ribosomal subunits, but not 50S ribosomal subunits or 70S ribosomes.

It is found in the cytoplasm. In terms of biological role, one of several proteins that assist in the late maturation steps of the functional core of the 30S ribosomal subunit. Associates with free 30S ribosomal subunits (but not with 30S subunits that are part of 70S ribosomes or polysomes). Required for efficient processing of 16S rRNA. May interact with the 5'-terminal helix region of 16S rRNA. The polypeptide is Ribosome-binding factor A (Protochlamydia amoebophila (strain UWE25)).